The following is a 282-amino-acid chain: Aldo-keto reductase MT3049 (282 aa).

Residue Tyr-57 is the Proton donor of the active site. Residues Leu-197, Val-235, Arg-237, Ser-238, Ala-239, Arg-243, Ser-246, Asn-247, and Arg-273 each contribute to the NADPH site.

This sequence belongs to the aldo/keto reductase family.

This Mycobacterium tuberculosis (strain CDC 1551 / Oshkosh) protein is Aldo-keto reductase MT3049.